The following is a 385-amino-acid chain: Trichodiene synthase (385 aa).

Belongs to the trichodiene synthase family.

The catalysed reaction is (2E,6E)-farnesyl diphosphate = trichodiene + diphosphate. It participates in sesquiterpene biosynthesis; trichothecene biosynthesis. In terms of biological role, TS is a member of the terpene cyclase group of enzymes. It catalyzes the isomerization and cyclization of farnesyl pyro-phosphate to form trichodiene, the first cyclic intermediate in the biosynthetic pathway for trichothecenes. It serves to branch trichothecene biosynthesis from the isoprenoid pathway. This is Trichodiene synthase (TRI5) from Paramyrothecium roridum (Myrothecium leaf spot fungus).